A 377-amino-acid polypeptide reads, in one-letter code: Succinyl-diaminopimelate desuccinylase (377 aa).

His66 contributes to the Zn(2+) binding site. Residue Asp68 is part of the active site. Asp99 is a Zn(2+) binding site. The Proton acceptor role is filled by Glu133. 3 residues coordinate Zn(2+): Glu134, Glu163, and His349.

This sequence belongs to the peptidase M20A family. DapE subfamily. Homodimer. The cofactor is Zn(2+). Co(2+) serves as cofactor.

The enzyme catalyses N-succinyl-(2S,6S)-2,6-diaminopimelate + H2O = (2S,6S)-2,6-diaminopimelate + succinate. It functions in the pathway amino-acid biosynthesis; L-lysine biosynthesis via DAP pathway; LL-2,6-diaminopimelate from (S)-tetrahydrodipicolinate (succinylase route): step 3/3. In terms of biological role, catalyzes the hydrolysis of N-succinyl-L,L-diaminopimelic acid (SDAP), forming succinate and LL-2,6-diaminopimelate (DAP), an intermediate involved in the bacterial biosynthesis of lysine and meso-diaminopimelic acid, an essential component of bacterial cell walls. This is Succinyl-diaminopimelate desuccinylase from Legionella pneumophila (strain Corby).